The chain runs to 424 residues: tRNA (guanine-N(7)-)-methyltransferase non-catalytic subunit wuho (424 aa).

The disordered stretch occupies residues 42–92 (LKGHTSQSQESCTAAAAASTATAASGQAPGGKEQQLANQPEEGGTSASASG). Residues 46 to 68 (TSQSQESCTAAAAASTATAASGQ) are compositionally biased toward low complexity. 4 WD repeats span residues 96-137 (ATST…ARLL), 184-223 (GHLS…DIHS), 227-265 (GHRE…ELLQ), and 324-364 (AGSW…PASS).

Belongs to the WD repeat TRM82 family. As to quaternary structure, forms a heterodimer with the catalytic subunit Mettl1. Interacts with mei-P26 and weakly interacts with bgcn; required for the function or formation of the mei-P26-bgcn-bam-sxl complex. Interacts with nanos; may be involved in mei-P26-dependent derepression of the BMP signaling pathway. Interacts with Myc; the interaction may be mediated by mei-P26 and may be involved in the regulation of ribosome biogenesis. In terms of tissue distribution, in testis, it is present at high level in hub cells, a niche for germline stem cells of testis. Ubiquitously expressed in all testicular cells throughout spermatogenesis. Ubiquitously expressed in all germline and somatic cells of the ovary.

It localises to the nucleus. Its subcellular location is the cytoplasm. It functions in the pathway tRNA modification; N(7)-methylguanine-tRNA biosynthesis. Functionally, required for the Mettl1-dependent formation of N(7)-methylguanine at position 46 (m7G46) in tRNA. In the Mettl1-wuho methyltransferase complex, it is required to stabilize and induce conformational changes of the catalytic subunit. Required for binding of nanos mRNA and repression of translation by the mei-P26-bgcn-bam-sxl complex. May cooperate with mei-P26 and nanos to derepress the BMP signaling pathway. May cooperate with mei-P26 to suppress expression of a subset of microRNAs. May cooperate with mei-P26 to regulate bam expression levels in germline cells during gametogenesis. Required to promote mitosis to meiosis transition during gametogenesis. May regulate germline cell division in part by regulating ribosome biogenesis. In Drosophila melanogaster (Fruit fly), this protein is tRNA (guanine-N(7)-)-methyltransferase non-catalytic subunit wuho.